Reading from the N-terminus, the 97-residue chain is Aspartyl/glutamyl-tRNA(Asn/Gln) amidotransferase subunit C (97 aa).

A disordered region spans residues 74 to 97 (AEQALDQAPASQRDRFEVPRILGE). Over residues 85–97 (QRDRFEVPRILGE) the composition is skewed to basic and acidic residues.

This sequence belongs to the GatC family. As to quaternary structure, heterotrimer of A, B and C subunits.

The catalysed reaction is L-glutamyl-tRNA(Gln) + L-glutamine + ATP + H2O = L-glutaminyl-tRNA(Gln) + L-glutamate + ADP + phosphate + H(+). The enzyme catalyses L-aspartyl-tRNA(Asn) + L-glutamine + ATP + H2O = L-asparaginyl-tRNA(Asn) + L-glutamate + ADP + phosphate + 2 H(+). In terms of biological role, allows the formation of correctly charged Asn-tRNA(Asn) or Gln-tRNA(Gln) through the transamidation of misacylated Asp-tRNA(Asn) or Glu-tRNA(Gln) in organisms which lack either or both of asparaginyl-tRNA or glutaminyl-tRNA synthetases. The reaction takes place in the presence of glutamine and ATP through an activated phospho-Asp-tRNA(Asn) or phospho-Glu-tRNA(Gln). This chain is Aspartyl/glutamyl-tRNA(Asn/Gln) amidotransferase subunit C, found in Corynebacterium kroppenstedtii (strain DSM 44385 / JCM 11950 / CIP 105744 / CCUG 35717).